A 384-amino-acid polypeptide reads, in one-letter code: Alkanesulfonate monooxygenase (384 aa).

The protein belongs to the SsuD family.

The enzyme catalyses an alkanesulfonate + FMNH2 + O2 = an aldehyde + FMN + sulfite + H2O + 2 H(+). Its function is as follows. Catalyzes the desulfonation of aliphatic sulfonates. The protein is Alkanesulfonate monooxygenase of Burkholderia thailandensis (strain ATCC 700388 / DSM 13276 / CCUG 48851 / CIP 106301 / E264).